Consider the following 229-residue polypeptide: Pyridoxal phosphate homeostasis protein (229 aa).

Position 36 is an N6-(pyridoxal phosphate)lysine (Lys36).

The protein belongs to the pyridoxal phosphate-binding protein YggS/PROSC family. In terms of assembly, monomer.

In terms of biological role, pyridoxal 5'-phosphate (PLP)-binding protein, which is involved in PLP homeostasis. The protein is Pyridoxal phosphate homeostasis protein of Buchnera aphidicola subsp. Schizaphis graminum (strain Sg).